Reading from the N-terminus, the 453-residue chain is Allantoinase (453 aa).

The Zn(2+) site is built by H59, H61, K146, H186, H242, and D315. An N6-carboxylysine modification is found at K146.

It belongs to the metallo-dependent hydrolases superfamily. Allantoinase family. In terms of assembly, homotetramer. Zn(2+) serves as cofactor. Carboxylation allows a single lysine to coordinate two zinc ions.

It catalyses the reaction (S)-allantoin + H2O = allantoate + H(+). It participates in nitrogen metabolism; (S)-allantoin degradation; allantoate from (S)-allantoin: step 1/1. Catalyzes the conversion of allantoin (5-ureidohydantoin) to allantoic acid by hydrolytic cleavage of the five-member hydantoin ring. This Salmonella agona (strain SL483) protein is Allantoinase.